An 85-amino-acid polypeptide reads, in one-letter code: Small ribosomal subunit protein uS15c (85 aa).

The protein belongs to the universal ribosomal protein uS15 family. In terms of assembly, part of the 30S ribosomal subunit.

The protein resides in the plastid. It localises to the chloroplast. This chain is Small ribosomal subunit protein uS15c (rps15), found in Chaetosphaeridium globosum (Charophycean green alga).